Here is a 238-residue protein sequence, read N- to C-terminus: Proenkephalin-A (238 aa).

An N-terminal signal peptide occupies residues 1–25; it reads MAASALSTCLWMLVLGTCVSLVVGT. 3 disulfide bridges follow: C27–C50, C31–C54, and C34–C66. A disordered region spans residues 76–103; that stretch reads QSPLASQQDQERVDAMMADEEDATSPEH. 3 consecutive propeptides follow at residues 124–167, 177–195, and 206–230; these read SSAS…AEAV, ADRGAAQGNLVEAVLGRVL, and VGRPEWLVDSSKKVGVLKENGSELQ.

The protein belongs to the opioid neuropeptide precursor family. In terms of tissue distribution, expressed by the venom gland. Moderately expressed in the venom gland transcriptome.

It localises to the secreted. Functionally, met-enkephalins compete with and mimic the effects of opiate drugs. They play a role in a number of physiologic functions, including pain perception and responses to stress. Enkephalin peptides found in Meiacanthus fangblennies induce physiological effects via their interaction with delta-type opioid receptors (OPRD1) (tested on M.grammistes). Therefore, finding a proenkephalin sequence in M.atrodorsalis venom suggests that this protein act in the same manner. This is Proenkephalin-A from Meiacanthus atrodorsalis (Forktail blenny).